A 270-amino-acid chain; its full sequence is Urease accessory protein UreD (270 aa).

Belongs to the UreD family. In terms of assembly, ureD, UreF and UreG form a complex that acts as a GTP-hydrolysis-dependent molecular chaperone, activating the urease apoprotein by helping to assemble the nickel containing metallocenter of UreC. The UreE protein probably delivers the nickel.

It localises to the cytoplasm. Its function is as follows. Required for maturation of urease via the functional incorporation of the urease nickel metallocenter. The protein is Urease accessory protein UreD of Klebsiella pneumoniae.